The primary structure comprises 242 residues: Probable transcriptional regulatory protein BamMC406_2210 (242 aa).

It belongs to the TACO1 family.

It is found in the cytoplasm. In Burkholderia ambifaria (strain MC40-6), this protein is Probable transcriptional regulatory protein BamMC406_2210.